Here is a 343-residue protein sequence, read N- to C-terminus: MPSPLSLCRYLPRELSPSVDSRSCSIPLVAPRKAGKLFLGTTPPRAPGLPRRLAWFSIDWEQVCLMHRLGSGGFGSVYKATYHGVPVAIKQVNKCTKDLRASQRSFWAELNIARLRHDNIVRVVAASTRTPEDSNSLGTIIMEFGGNVTLHQVIYGATRSPEPLSCREQLSLGKCLKYSLDVVNGLLFLHSQSILHLDLKPANILISEQDVCKISDFGCSQKLQDLRCRQASPHHIGGTYTHQAPEILKGEIATPKADIYSFGITLWQMTTREVPYSGEPQYVQYAVVAYNLRPSLAGAVFTASLTGKTLQNIIQSCWEARALQRPGAELLQRDLKAFRGALG.

Positions 63–339 (VCLMHRLGSG…LLQRDLKAFR (277 aa)) constitute a Protein kinase domain. Residues 69 to 77 (LGSGGFGSV) and Lys-90 each bind ATP. The active-site Proton acceptor is the Asp-198.

This sequence belongs to the protein kinase superfamily. Ser/Thr protein kinase family. In terms of assembly, interacts with MAP2K1/MEK1.

It is found in the cytoplasm. The catalysed reaction is L-seryl-[protein] + ATP = O-phospho-L-seryl-[protein] + ADP + H(+). It catalyses the reaction L-threonyl-[protein] + ATP = O-phospho-L-threonyl-[protein] + ADP + H(+). Functionally, serine/threonine kinase involved in the regulation of MAPK signaling. Is an activator of the ERK1/2 signaling cascade playing an essential role in the stimulation of oocyte maturation. This chain is Proto-oncogene serine/threonine-protein kinase mos, found in Mus musculus (Mouse).